The sequence spans 325 residues: Undecaprenyl-phosphate 4-deoxy-4-formamido-L-arabinose transferase (325 aa).

Transmembrane regions (helical) follow at residues 234-254 (LLSV…LLLI) and 269-289 (VFML…GMGL).

Belongs to the glycosyltransferase 2 family.

The protein localises to the cell inner membrane. The catalysed reaction is UDP-4-deoxy-4-formamido-beta-L-arabinose + di-trans,octa-cis-undecaprenyl phosphate = 4-deoxy-4-formamido-alpha-L-arabinopyranosyl di-trans,octa-cis-undecaprenyl phosphate + UDP. Its pathway is glycolipid biosynthesis; 4-amino-4-deoxy-alpha-L-arabinose undecaprenyl phosphate biosynthesis; 4-amino-4-deoxy-alpha-L-arabinose undecaprenyl phosphate from UDP-4-deoxy-4-formamido-beta-L-arabinose and undecaprenyl phosphate: step 1/2. The protein operates within bacterial outer membrane biogenesis; lipopolysaccharide biosynthesis. In terms of biological role, catalyzes the transfer of 4-deoxy-4-formamido-L-arabinose from UDP to undecaprenyl phosphate. The modified arabinose is attached to lipid A and is required for resistance to polymyxin and cationic antimicrobial peptides. The sequence is that of Undecaprenyl-phosphate 4-deoxy-4-formamido-L-arabinose transferase from Erwinia tasmaniensis (strain DSM 17950 / CFBP 7177 / CIP 109463 / NCPPB 4357 / Et1/99).